The primary structure comprises 202 residues: Glycerol-3-phosphate acyltransferase (202 aa).

6 consecutive transmembrane segments (helical) span residues 3-23 (NLII…LILT), 61-81 (IATI…LKFL), 87-107 (LLWS…YLLF), 117-137 (AGAM…VWAV), 144-164 (ISSL…FIFN), and 167-187 (LEIH…YKHL).

It belongs to the PlsY family. In terms of assembly, probably interacts with PlsX.

It is found in the cell inner membrane. The enzyme catalyses an acyl phosphate + sn-glycerol 3-phosphate = a 1-acyl-sn-glycero-3-phosphate + phosphate. The protein operates within lipid metabolism; phospholipid metabolism. Catalyzes the transfer of an acyl group from acyl-phosphate (acyl-PO(4)) to glycerol-3-phosphate (G3P) to form lysophosphatidic acid (LPA). This enzyme utilizes acyl-phosphate as fatty acyl donor, but not acyl-CoA or acyl-ACP. In Campylobacter jejuni subsp. doylei (strain ATCC BAA-1458 / RM4099 / 269.97), this protein is Glycerol-3-phosphate acyltransferase.